Consider the following 620-residue polypeptide: Proline--tRNA ligase (620 aa).

This sequence belongs to the class-II aminoacyl-tRNA synthetase family. ProS type 1 subfamily. As to quaternary structure, homodimer.

The protein localises to the cytoplasm. The catalysed reaction is tRNA(Pro) + L-proline + ATP = L-prolyl-tRNA(Pro) + AMP + diphosphate. In terms of biological role, catalyzes the attachment of proline to tRNA(Pro) in a two-step reaction: proline is first activated by ATP to form Pro-AMP and then transferred to the acceptor end of tRNA(Pro). As ProRS can inadvertently accommodate and process non-cognate amino acids such as alanine and cysteine, to avoid such errors it has two additional distinct editing activities against alanine. One activity is designated as 'pretransfer' editing and involves the tRNA(Pro)-independent hydrolysis of activated Ala-AMP. The other activity is designated 'posttransfer' editing and involves deacylation of mischarged Ala-tRNA(Pro). The misacylated Cys-tRNA(Pro) is not edited by ProRS. This chain is Proline--tRNA ligase, found in Streptococcus suis (strain 98HAH33).